A 354-amino-acid polypeptide reads, in one-letter code: Guanine nucleotide-binding protein G(i) subunit alpha (354 aa).

G2 is lipidated: N-myristoyl glycine. C3 is lipidated: S-palmitoyl cysteine. Positions 32-354 constitute a G-alpha domain; it reads REVKLLLLGA…KNNLKDCGLF (323 aa). Positions 35 to 48 are G1 motif; the sequence is KLLLLGAGESGKST. GTP-binding positions include 40-47, 175-181, 200-204, 269-272, and A326; these read GAGESGKS, LRTRVKT, DVGGQ, and NKKD. 2 residues coordinate Mg(2+): S47 and T181. A G2 motif region spans residues 173-181; the sequence is DVLRTRVKT. The tract at residues 196 to 205 is G3 motif; it reads FKMFDVGGQR. Positions 265–272 are G4 motif; it reads ILFLNKKD. The tract at residues 324-329 is G5 motif; the sequence is TCATDT.

Belongs to the G-alpha family. G(i/o/t/z) subfamily. As to quaternary structure, g proteins are composed of 3 units; alpha, beta and gamma. The alpha chain contains the guanine nucleotide binding site.

Its function is as follows. Guanine nucleotide-binding proteins (G proteins) are involved as modulators or transducers in various transmembrane signaling systems. This chain is Guanine nucleotide-binding protein G(i) subunit alpha, found in Planorbella trivolvis (Marsh rams-horn).